Here is a 3470-residue protein sequence, read N- to C-terminus: Mucin-4 (3470 aa).

The N-terminal stretch at 1–28 is a signal peptide; sequence MRGPHWRVPWLCLSCLYSCLLLLPDALA. The tract at residues 32-163 is disordered; the sequence is TQTPMSLSSS…STESTSVDSG (132 aa). The span at 37 to 57 shows a compositional bias: low complexity; the sequence is SLSSSTRTSQMSSQASTSSTS. Threonine 42, threonine 44, threonine 65, threonine 68, threonine 87, threonine 91, threonine 96, threonine 97, threonine 98, threonine 99, threonine 100, threonine 103, threonine 104, threonine 106, threonine 117, threonine 130, threonine 131, threonine 132, threonine 145, threonine 146, threonine 150, threonine 151, threonine 152, and threonine 155 each carry an O-linked (GalNAc...) threonine glycan. The interval 43–2501 is variable number of tandem repeats (VNTR); sequence RTSQMSSQAS…ETLINDFTSS (2459 aa). The span at 66–85 shows a compositional bias: polar residues; it reads EQTSTRDTPSSITTVSQSHH. A compositionally biased stretch (low complexity) spans 86 to 111; it reads TTSMETSKPQTTTTTEVTTSTPSASS. Residues 112–129 are compositionally biased toward polar residues; sequence RDQIQTETSSQRTISPDG. Low complexity predominate over residues 130 to 162; sequence TTTSHAPSISSSAPSTTHMLTTTSSTESTSVDS. An N-linked (GlcNAc...) asparagine glycan is attached at asparagine 188. Positions 199–220 are enriched in polar residues; that stretch reads TLTQRQHTGSKQTSSKSQVNIV. Disordered stretches follow at residues 199-679, 691-925, 938-1219, 1232-1400, 1413-1524, 1537-1647, and 1660-1992; these read TLTQ…STVS, FPQS…NMST, TLPQ…MSTV, LPQS…MSTV, LPKS…NMST, and TLPQ…TEIT. The span at 221 to 232 shows a compositional bias: low complexity; the sequence is TSTLSTSTSDST. A compositionally biased stretch (polar residues) spans 233-243; sequence PAQTMSQVTSS. Threonine 236 and threonine 241 each carry an O-linked (GalNAc...) threonine glycan. The segment covering 251-272 has biased composition (low complexity); that stretch reads STSGVSSTSLTTTEVLTQTSST. Residues 273 to 283 show a composition bias toward polar residues; it reads DSAPGNTTLRI. Asparagine 278 and asparagine 286 each carry an N-linked (GlcNAc...) asparagine glycan. The segment covering 284–299 has biased composition (low complexity); it reads TQNSTTHTTKVSTTST. Residue threonine 297 is glycosylated (O-linked (GalNAc...) threonine). Over residues 300–335 the composition is skewed to polar residues; that stretch reads PQKLSPVSTLINSSQKMSTLPQNQHTESMDTSRQPQ. An N-linked (GlcNAc...) asparagine glycan is attached at asparagine 311. Over residues 336-346 the composition is skewed to low complexity; it reads TTTTIEVTTST. Polar residues predominate over residues 347-448; that stretch reads PSASSLHQIQ…LTSSYSQHIQ (102 aa). 6 O-linked (GalNAc...) threonine glycosylation sites follow: threonine 357, threonine 370, threonine 371, threonine 372, threonine 385, and threonine 423. The segment covering 449–470 has biased composition (low complexity); sequence SKGTSSKSQTTTNTKVNTSTPS. N-linked (GlcNAc...) asparagine glycosylation occurs at asparagine 465. Polar residues predominate over residues 479–489; sequence TETSSQRTNSP. O-linked (GalNAc...) threonine glycosylation occurs at threonine 494. Over residues 496–510 the composition is skewed to low complexity; the sequence is HAPSMSSSAPSTTHM. Residues 511–577 are compositionally biased toward polar residues; the sequence is LSTTSSNQST…SQSQHTGSKG (67 aa). O-linked (GalNAc...) threonine glycosylation is present at threonine 513. Asparagine 517 carries an N-linked (GlcNAc...) asparagine glycan. Threonine 542 and threonine 545 each carry an O-linked (GalNAc...) threonine glycan. N-linked (GlcNAc...) asparagine glycosylation is present at asparagine 550. 18 O-linked (GalNAc...) threonine glycosylation sites follow: threonine 551, threonine 584, threonine 585, threonine 586, threonine 587, threonine 588, threonine 592, threonine 594, threonine 599, threonine 605, threonine 618, threonine 619, threonine 620, threonine 633, threonine 634, threonine 639, threonine 640, and threonine 655. The span at 578 to 599 shows a compositional bias: low complexity; that stretch reads TSSNPQTTTTTEVTTSTPSATT. Over residues 600–631 the composition is skewed to polar residues; it reads HDQIQTETSSQNTISPGETTTSYAPIMSSSAP. The span at 632 to 647 shows a compositional bias: low complexity; that stretch reads STTHMLSTTSSTQSTS. 2 stretches are compositionally biased toward polar residues: residues 653–679 and 691–701; these read TTTLTNQGSTPATTQVSPSSQNMSTVS and FPQSQHTGSKG. N-linked (GlcNAc...) asparagine glycosylation is present at asparagine 674. 6 O-linked (GalNAc...) threonine glycosylation sites follow: threonine 702, threonine 708, threonine 709, threonine 710, threonine 711, and threonine 716. Residues 702 to 723 are compositionally biased toward low complexity; that stretch reads TSSNPQTTTTPVVTTSNPSATS. An N-linked (GlcNAc...) asparagine glycan is attached at asparagine 718. The span at 724–741 shows a compositional bias: polar residues; that stretch reads RDQIQTETSSQRTISPGE. A compositionally biased stretch (low complexity) spans 742–772; the sequence is TTTSYASIMSSSAPSTTHMLTTTSSTQSTSV. O-linked (GalNAc...) threonine glycans are attached at residues threonine 743, threonine 744, threonine 757, and threonine 758. Positions 780–824 are enriched in polar residues; that stretch reads VRTQGSTPATTQVSPSSQNMSTVSTPITSTQILSTLPQSQHTGSK. Asparagine 798 carries an N-linked (GlcNAc...) asparagine glycan. The span at 825-848 shows a compositional bias: low complexity; sequence GTSSNPQTTTSPVVTTSTPSGTSG. O-linked (GalNAc...) threonine glycosylation is found at threonine 826, threonine 832, threonine 833, threonine 834, threonine 839, threonine 840, threonine 842, threonine 846, and threonine 853. Polar residues predominate over residues 849 to 879; the sequence is DQIQTETSSQRTISPGKTTTSHALNINSSAP. Asparagine 875 is a glycosylation site (N-linked (GlcNAc...) asparagine). Over residues 880 to 895 the composition is skewed to low complexity; sequence STTHMLSTTSSTQSTS. 2 O-linked (GalNAc...) threonine glycosylation sites follow: threonine 901 and threonine 902. Over residues 901-925 the composition is skewed to polar residues; that stretch reads TTAGRTQGSTPATTQVSPSSQNMST. The N-linked (GlcNAc...) asparagine glycan is linked to asparagine 922. Over residues 948–968 the composition is skewed to low complexity; that stretch reads KSTSTNPQTTTTPEVTTSNPS. O-linked (GalNAc...) threonine glycans are attached at residues threonine 950, threonine 952, threonine 956, threonine 957, threonine 958, threonine 959, threonine 963, and threonine 964. Residue asparagine 966 is glycosylated (N-linked (GlcNAc...) asparagine). Over residues 969-1003 the composition is skewed to polar residues; that stretch reads ATSHDQIETETSSQRTISPGETTTSYAPIMSSSAP. O-linked (GalNAc...) threonine glycans are attached at residues threonine 990, threonine 991, threonine 992, threonine 1005, threonine 1006, threonine 1011, threonine 1012, and threonine 1015. Over residues 1004–1019 the composition is skewed to low complexity; the sequence is STTHMLSTTSSTQSTS. The span at 1020–1065 shows a compositional bias: polar residues; sequence VDTRNTTTLTTQGSTPATTQVSPSSKNMSTVSTPITSTHKLSTLPQ. An N-linked (GlcNAc...) asparagine glycan is attached at asparagine 1024. 5 O-linked (GalNAc...) threonine glycosylation sites follow: threonine 1025, threonine 1026, threonine 1027, threonine 1029, and threonine 1038. 3 N-linked (GlcNAc...) asparagine glycosylation sites follow: asparagine 1046, asparagine 1072, and asparagine 1091. Low complexity predominate over residues 1066–1083; it reads SQHTGSNGTSSSSSTPAT. The segment covering 1091–1120 has biased composition (polar residues); that stretch reads NMSTVSTPITTTHKLSTLSQSQHTGSKGTS. Residues 1121 to 1140 show a composition bias toward low complexity; sequence SNPQTTTTPVMTTSTPSATT. 11 O-linked (GalNAc...) threonine glycosylation sites follow: threonine 1125, threonine 1126, threonine 1127, threonine 1128, threonine 1132, threonine 1133, threonine 1135, threonine 1140, threonine 1174, threonine 1198, and threonine 1207. Composition is skewed to polar residues over residues 1141-1219 and 1232-1242; these read HDQI…MSTV and LPQSQHTGSKG. Asparagine 1215 carries N-linked (GlcNAc...) asparagine glycosylation. Threonine 1243, threonine 1245, threonine 1249, threonine 1250, threonine 1251, threonine 1252, threonine 1256, threonine 1257, threonine 1259, threonine 1263, threonine 1270, threonine 1283, threonine 1284, threonine 1285, threonine 1298, threonine 1299, threonine 1304, threonine 1305, threonine 1318, and threonine 1319 each carry an O-linked (GalNAc...) threonine glycan. Over residues 1243–1264 the composition is skewed to low complexity; that stretch reads TSTNPQTTTTPEVTTSTPSATS. Residues 1265–1296 show a composition bias toward polar residues; sequence RDQIQTETSSQRTISPGETTTSHAPIMSSSAP. The span at 1297 to 1312 shows a compositional bias: low complexity; the sequence is STTHMLSTTSSTQSTS. Residues 1318–1353 show a composition bias toward polar residues; sequence TTAGRTQGSTPATTQVSPSSQNMTTTSHALMSSSAP. Asparagine 1339 carries N-linked (GlcNAc...) asparagine glycosylation. 11 O-linked (GalNAc...) threonine glycosylation sites follow: threonine 1341, threonine 1342, threonine 1355, threonine 1356, threonine 1365, threonine 1368, threonine 1372, threonine 1375, threonine 1376, threonine 1377, and threonine 1379. A compositionally biased stretch (low complexity) spans 1354–1390; that stretch reads STTHMLSTTSSTQSTSVDTRHTTTVTTQGSTPATTQV. Polar residues-rich tracts occupy residues 1391–1400 and 1413–1477; these read LPSSQNMSTV and LPQS…SSAP. N-linked (GlcNAc...) asparagine glycosylation is present at asparagine 1396. Threonine 1426, threonine 1430, threonine 1431, threonine 1440, threonine 1451, threonine 1453, threonine 1464, threonine 1465, and threonine 1466 each carry an O-linked (GalNAc...) threonine glycan. Asparagine 1471 carries an N-linked (GlcNAc...) asparagine glycan. A compositionally biased stretch (low complexity) spans 1478–1489; sequence STTHMLSSTSST. O-linked (GalNAc...) threonine glycosylation is found at threonine 1479, threonine 1480, threonine 1499, and threonine 1512. Polar residues-rich tracts occupy residues 1490 to 1524 and 1537 to 1553; these read QITSVDTGHTSAGRTQGSTPATTQVSPSSQNMSTV and LPKSQHTGSKGTSSNPQ. Asparagine 1520 carries N-linked (GlcNAc...) asparagine glycosylation. O-linked (GalNAc...) threonine glycans are attached at residues threonine 1554, threonine 1555, threonine 1557, and threonine 1562. Residues 1554–1569 are compositionally biased toward low complexity; sequence TTITPVVTTSTPSASS. Residues 1570–1587 show a composition bias toward polar residues; the sequence is RDQIQTETSFQRTISPGE. Residues threonine 1588, threonine 1589, threonine 1590, threonine 1604, threonine 1609, threonine 1627, threonine 1635, and threonine 1636 are each glycosylated (O-linked (GalNAc...) threonine). A compositionally biased stretch (low complexity) spans 1588–1609; it reads TTTSHAPSMSSSAPSSTHMLST. Polar residues predominate over residues 1610–1647; that stretch reads ASSTQITSVDTRHTTAITTQGSTPATTQVSPSSQNMST. The N-linked (GlcNAc...) asparagine glycan is linked to asparagine 1644. Residues 1670 to 1693 are compositionally biased toward low complexity; the sequence is KSTSTNPQTTTTPRVTTSTPSASS. Threonine 1672, threonine 1674, threonine 1678, threonine 1679, threonine 1680, threonine 1681, threonine 1685, threonine 1686, threonine 1688, threonine 1699, and threonine 1714 each carry an O-linked (GalNAc...) threonine glycan. Polar residues predominate over residues 1694–1725; the sequence is RDQIQTETSSQRTISPGKTTTSHVPNMNSSAP. A glycan (N-linked (GlcNAc...) asparagine) is linked at asparagine 1721. The segment covering 1726-1742 has biased composition (low complexity); it reads STTHILSTTSSIQSTSG. The segment covering 1747 to 1837 has biased composition (polar residues); sequence TTAVRTQGST…SSQRTISPGE (91 aa). Residue asparagine 1770 is glycosylated (N-linked (GlcNAc...) asparagine). 9 O-linked (GalNAc...) threonine glycosylation sites follow: threonine 1838, threonine 1839, threonine 1840, threonine 1854, threonine 1873, threonine 1874, threonine 1888, threonine 1889, and threonine 1891. A compositionally biased stretch (low complexity) spans 1838–1859; it reads TTTSHASSLSSSAPSSTHMLST. The segment covering 1860-1877 has biased composition (polar residues); the sequence is ASSTEITSGDTRHTTAIV. Residues 1878–1895 are compositionally biased toward low complexity; the sequence is TQGSTPATTQTTLTPSSQ. N-linked (GlcNAc...) asparagine glycosylation occurs at asparagine 1896. Positions 1896-1927 are enriched in polar residues; sequence NMSTVSTPITSTHKLSPLPQSQHTENMGTSSN. Positions 1928-1945 are enriched in low complexity; it reads PQTTTTPEVTTSTPSATS. O-linked (GalNAc...) threonine glycosylation is found at threonine 1930, threonine 1931, threonine 1932, threonine 1933, threonine 1937, threonine 1938, threonine 1940, threonine 1964, threonine 1965, threonine 1966, and threonine 1980. The span at 1946 to 1992 shows a compositional bias: polar residues; it reads YDQIQTETSFQRTISPGETTTSHAPSMSNSAPSSTHKLSTASSTEIT. N-linked (GlcNAc...) asparagine glycosylation is present at asparagine 2022. The segment covering 2037–2055 has biased composition (polar residues); it reads STLRQSQHTGSKGTSSNHQ. 4 disordered regions span residues 2037-2107, 2139-2185, 2205-2237, and 2262-2368; these read STLR…NTTH, QVSL…NITP, TMSWGTSSSGTINTLSTPVRNTSPASTSGILTS, and TSTS…TVPL. Residues threonine 2056 and threonine 2057 are each glycosylated (O-linked (GalNAc...) threonine). Over residues 2056–2071 the composition is skewed to low complexity; sequence TTTTPVVTTSTSSATS. Over residues 2072-2089 the composition is skewed to polar residues; it reads RDQIQTETSSLRTISPDG. 3 O-linked (GalNAc...) threonine glycosylation sites follow: threonine 2090, threonine 2091, and threonine 2092. Residues 2090–2107 are compositionally biased toward low complexity; it reads TTTSHASSMSSSSPNTTH. N-linked (GlcNAc...) asparagine glycosylation is present at asparagine 2104. O-linked (GalNAc...) threonine glycosylation is found at threonine 2105 and threonine 2106. Residues asparagine 2148, asparagine 2182, and asparagine 2225 are each glycosylated (N-linked (GlcNAc...) asparagine). 2 stretches are compositionally biased toward polar residues: residues 2205-2229 and 2262-2303; these read TMSWGTSSSGTINTLSTPVRNTSPA and TSTS…QTSI. O-linked (GalNAc...) threonine glycans are attached at residues threonine 2264, threonine 2352, threonine 2354, threonine 2359, and threonine 2360. Low complexity predominate over residues 2344–2367; it reads TAVSATSSTLTSPSPTTASRSTVP. One can recognise an NIDO domain in the interval 2458-2613; sequence PFWADADFSS…GLQVYRLHRE (156 aa). The AMOP domain maps to 2614–2726; sequence ERPNYRLKCL…SFCVWYQLRR (113 aa). The VWFD domain maps to 2738-2937; the sequence is RPAWTFGDPH…TWHVNGTGLL (200 aa). Asparagine 2755, asparagine 2773, asparagine 2801, asparagine 2827, asparagine 2844, asparagine 2853, asparagine 2888, asparagine 2909, asparagine 2916, asparagine 2932, asparagine 2958, asparagine 2985, asparagine 3003, asparagine 3014, asparagine 3054, asparagine 3079, asparagine 3102, asparagine 3109, asparagine 3157, and asparagine 3174 each carry an N-linked (GlcNAc...) asparagine glycan. The 40-residue stretch at 3173 to 3212 folds into the EGF-like 1 domain; that stretch reads PNRSCPMNYCYNNGHCDISEAPGCQPTCTCPPAFTDNRCF. 3 cysteine pairs are disulfide-bonded: cysteine 3177–cysteine 3188, cysteine 3182–cysteine 3200, and cysteine 3202–cysteine 3211. Residues asparagine 3240, asparagine 3247, and asparagine 3353 are each glycosylated (N-linked (GlcNAc...) asparagine). Positions 3382 to 3421 constitute an EGF-like 2 domain; sequence VSPCSEGYCHNGGQCKHLPDGPQCSCASFTIYSSSGEHCE. 3 disulfides stabilise this stretch: cysteine 3385-cysteine 3396, cysteine 3390-cysteine 3405, and cysteine 3407-cysteine 3420. The helical transmembrane segment at 3432–3452 threads the bilayer; that stretch reads GILFGTLGALLLLGILAFMIF.

As to quaternary structure, a heterodimeric complex, composed of a mucin-4 alpha chain and a cysteine-rich transmembrane mucin-4 beta chain. Mucin-4 beta chain interacts with ERBB2 via the EGF-like domain 1. In nonpolarized cells, associates with ERBB2 and ERBB3. Proteolytically cleaved into 2 chains, mucin-4 alpha chain and mucin-4 beta chain. In terms of processing, highly O-glycosylated. Post-translationally, predominantly N-glycosylated. Expressed in trachea, duodenum and intestine. Lower expression in stomach, salivary glands, liver, gallbladder, and kidney.

It is found in the cell membrane. The protein localises to the secreted. In terms of biological role, membrane-bound mucin, a family of highly glycosylated proteins that constitute the major component of the mucus, the slimy and viscous secretion covering epithelial surfaces. These glycoproteins play important roles in the protection of the epithelium and are implicated in epithelial renewal and differentiation. Regulates cellular behavior through both anti-adhesive effects on cell-cell and cell-extracellular matrix interactions and its ability to act as an intramembrane ligand for ERBB2. Plays an important role in proliferation and differentiation of epithelial cells by inducing specific phosphorylation of ERBB2. In polarized epithelial cells, segregates ERBB2 and other ERBB receptors and prevents ERBB2 from acting as a coreceptor. The interaction with ERBB2 leads to enhanced expression of CDKN1B. The formation of a MUC4-ERBB2-ERBB3-NRG1 complex leads to down-regulation of CDKN1B, resulting in repression of apoptosis and stimulation of proliferation. Its ability to promote tumor growth may be mainly due to repression of apoptosis as opposed to proliferation. This Mus musculus (Mouse) protein is Mucin-4 (Muc4).